Here is a 218-residue protein sequence, read N- to C-terminus: Octanoyltransferase (218 aa).

The BPL/LPL catalytic domain occupies E31–Q206. Substrate is bound by residues R70–H77, S137–G139, and G150–A152. The active-site Acyl-thioester intermediate is C168.

This sequence belongs to the LipB family.

The protein resides in the cytoplasm. It carries out the reaction octanoyl-[ACP] + L-lysyl-[protein] = N(6)-octanoyl-L-lysyl-[protein] + holo-[ACP] + H(+). It functions in the pathway protein modification; protein lipoylation via endogenous pathway; protein N(6)-(lipoyl)lysine from octanoyl-[acyl-carrier-protein]: step 1/2. In terms of biological role, catalyzes the transfer of endogenously produced octanoic acid from octanoyl-acyl-carrier-protein onto the lipoyl domains of lipoate-dependent enzymes. Lipoyl-ACP can also act as a substrate although octanoyl-ACP is likely to be the physiological substrate. The protein is Octanoyltransferase of Vibrio vulnificus (strain CMCP6).